A 166-amino-acid chain; its full sequence is Biotin carboxyl carrier protein of acetyl-CoA carboxylase (166 aa).

Residues 61–70 (STASEASSPA) show a composition bias toward polar residues. The segment at 61 to 82 (STASEASSPASVKDVPVEEQPQ) is disordered. The region spanning 90–166 (GDIVESPLVG…EFGQGLVRIK (77 aa)) is the Biotinyl-binding domain. Lys-132 is subject to N6-biotinyllysine.

As to quaternary structure, homodimer.

The protein operates within lipid metabolism; fatty acid biosynthesis. This protein is a component of the acetyl coenzyme A carboxylase complex; first, biotin carboxylase catalyzes the carboxylation of the carrier protein and then the transcarboxylase transfers the carboxyl group to form malonyl-CoA. The chain is Biotin carboxyl carrier protein of acetyl-CoA carboxylase from Streptococcus pyogenes serotype M6 (strain ATCC BAA-946 / MGAS10394).